Consider the following 493-residue polypeptide: Cytoplasmic tRNA 2-thiolation protein 2 (493 aa).

Residue S489 is modified to Phosphoserine.

It belongs to the CTU2/NCS2 family. As to quaternary structure, interacts with NCS6 and URM1. May act by forming a heterodimer with NCS6.

Its subcellular location is the cytoplasm. It functions in the pathway tRNA modification; 5-methoxycarbonylmethyl-2-thiouridine-tRNA biosynthesis. Plays a central role in 2-thiolation of mcm(5)S(2)U at tRNA wobble positions of tRNA(Lys), tRNA(Glu) and tRNA(Gln). May act by forming a heterodimer with NCS6 that ligates sulfur from thiocarboxylated URM1 onto the uridine of tRNAs at wobble position. Prior mcm(5) tRNA modification by the elongator complex is required for 2-thiolation. May also be involved in protein urmylation. This Saccharomyces cerevisiae (strain YJM789) (Baker's yeast) protein is Cytoplasmic tRNA 2-thiolation protein 2.